The sequence spans 256 residues: MTKITRIIKEARDQARLTALDFAQGIFENFVELHGDRSFRDDGAVIGGIGTLNGQPVTVVGIQKGRNLQDNLRRNFGQPHPEGYRKTLRLMKQAEKFGRPVVTFINTAGAYPGVGAEERGQGEAIARNLMEMSNLKVPIIAIIIGEGGSGGALALAVADKVWMLENSMYAVLSPEGFASILWKDGSRAMEAAELMKITSHELLQMEVVDKVIPERGFNNHELLAAVKEEIAAELDSLSQLPLEQLLENRYQRFRKY.

The region spanning 1–236 (MTKITRIIKE…KEEIAAELDS (236 aa)) is the CoA carboxyltransferase C-terminal domain.

Belongs to the AccA family. In terms of assembly, acetyl-CoA carboxylase is a heterohexamer composed of biotin carboxyl carrier protein (AccB), biotin carboxylase (AccC) and two subunits each of ACCase subunit alpha (AccA) and ACCase subunit beta (AccD).

Its subcellular location is the cytoplasm. The catalysed reaction is N(6)-carboxybiotinyl-L-lysyl-[protein] + acetyl-CoA = N(6)-biotinyl-L-lysyl-[protein] + malonyl-CoA. The protein operates within lipid metabolism; malonyl-CoA biosynthesis; malonyl-CoA from acetyl-CoA: step 1/1. Its function is as follows. Component of the acetyl coenzyme A carboxylase (ACC) complex. First, biotin carboxylase catalyzes the carboxylation of biotin on its carrier protein (BCCP) and then the CO(2) group is transferred by the carboxyltransferase to acetyl-CoA to form malonyl-CoA. In Streptococcus sanguinis (strain SK36), this protein is Acetyl-coenzyme A carboxylase carboxyl transferase subunit alpha.